We begin with the raw amino-acid sequence, 561 residues long: Dihydroxy-acid dehydratase (561 aa).

Residue cysteine 50 coordinates [2Fe-2S] cluster. Aspartate 82 contributes to the Mg(2+) binding site. A [2Fe-2S] cluster-binding site is contributed by cysteine 123. The Mg(2+) site is built by aspartate 124 and lysine 125. N6-carboxylysine is present on lysine 125. Cysteine 195 contacts [2Fe-2S] cluster. A Mg(2+)-binding site is contributed by glutamate 447. The active-site Proton acceptor is serine 473.

The protein belongs to the IlvD/Edd family. In terms of assembly, homodimer. The cofactor is [2Fe-2S] cluster. Mg(2+) serves as cofactor.

It catalyses the reaction (2R)-2,3-dihydroxy-3-methylbutanoate = 3-methyl-2-oxobutanoate + H2O. The enzyme catalyses (2R,3R)-2,3-dihydroxy-3-methylpentanoate = (S)-3-methyl-2-oxopentanoate + H2O. It participates in amino-acid biosynthesis; L-isoleucine biosynthesis; L-isoleucine from 2-oxobutanoate: step 3/4. It functions in the pathway amino-acid biosynthesis; L-valine biosynthesis; L-valine from pyruvate: step 3/4. Its function is as follows. Functions in the biosynthesis of branched-chain amino acids. Catalyzes the dehydration of (2R,3R)-2,3-dihydroxy-3-methylpentanoate (2,3-dihydroxy-3-methylvalerate) into 2-oxo-3-methylpentanoate (2-oxo-3-methylvalerate) and of (2R)-2,3-dihydroxy-3-methylbutanoate (2,3-dihydroxyisovalerate) into 2-oxo-3-methylbutanoate (2-oxoisovalerate), the penultimate precursor to L-isoleucine and L-valine, respectively. The chain is Dihydroxy-acid dehydratase from Trichodesmium erythraeum (strain IMS101).